We begin with the raw amino-acid sequence, 386 residues long: Skeletal aspartic acid-rich protein 1 (386 aa).

Residues 1-24 (MAFVSCFHLRLLFLCLALFMAAEC) form the signal peptide. Disordered regions lie at residues 33 to 145 (VDSD…PFSL) and 244 to 291 (EVTD…DCPH). A compositionally biased stretch (acidic residues) spans 63-107 (YDASDDNDNDNDDDDNNDNDNDNDDDNDVDRDNDNDDDDFDDSND). Basic and acidic residues-rich tracts occupy residues 133–142 (HSVESFEDRP) and 244–265 (EVTD…KDTP). Acidic residues predominate over residues 266–288 (DTDSDPDDSSDNANDGDDDDDDD).

In terms of tissue distribution, component of the acid-insoluble and acid-soluble organic matrix of the aragonitic skeleton (at protein level).

Its subcellular location is the secreted. This Acropora millepora (Staghorn coral) protein is Skeletal aspartic acid-rich protein 1.